The primary structure comprises 418 residues: Serine hydroxymethyltransferase (418 aa).

(6S)-5,6,7,8-tetrahydrofolate contacts are provided by residues Leu-121 and 125-127 (GHL). The residue at position 230 (Lys-230) is an N6-(pyridoxal phosphate)lysine. 355–357 (SPF) contributes to the (6S)-5,6,7,8-tetrahydrofolate binding site.

This sequence belongs to the SHMT family. Homodimer. Pyridoxal 5'-phosphate serves as cofactor.

Its subcellular location is the cytoplasm. It carries out the reaction (6R)-5,10-methylene-5,6,7,8-tetrahydrofolate + glycine + H2O = (6S)-5,6,7,8-tetrahydrofolate + L-serine. It participates in one-carbon metabolism; tetrahydrofolate interconversion. Its pathway is amino-acid biosynthesis; glycine biosynthesis; glycine from L-serine: step 1/1. Functionally, catalyzes the reversible interconversion of serine and glycine with tetrahydrofolate (THF) serving as the one-carbon carrier. This reaction serves as the major source of one-carbon groups required for the biosynthesis of purines, thymidylate, methionine, and other important biomolecules. Also exhibits THF-independent aldolase activity toward beta-hydroxyamino acids, producing glycine and aldehydes, via a retro-aldol mechanism. This chain is Serine hydroxymethyltransferase, found in Streptococcus pyogenes serotype M6 (strain ATCC BAA-946 / MGAS10394).